The sequence spans 64 residues: Large ribosomal subunit protein bL35 (64 aa).

Over residues 1–26 (MPKIKTHRGAAKRFKKTGTGKIKRSK) the composition is skewed to basic residues. Residues 1-48 (MPKIKTHRGAAKRFKKTGTGKIKRSKAYASHLLGGKSPKRKRNLRKAG) form a disordered region.

The protein belongs to the bacterial ribosomal protein bL35 family.

The chain is Large ribosomal subunit protein bL35 from Syntrophomonas wolfei subsp. wolfei (strain DSM 2245B / Goettingen).